The sequence spans 319 residues: Annexin A4 (319 aa).

A Phosphothreonine modification is found at T7. S12 is modified (phosphoserine). 4 Annexin repeats span residues 14 to 85 (FNAT…GMMT), 86 to 157 (PTVL…SLTA), 169 to 241 (ALVR…AIVK), and 245 to 316 (NKPA…ILCG). 3 positions are modified to N6-acetyllysine: K213, K293, and K300.

Belongs to the annexin family.

It localises to the zymogen granule membrane. Functionally, calcium/phospholipid-binding protein which promotes membrane fusion and is involved in exocytosis. This is Annexin A4 (Anxa4) from Rattus norvegicus (Rat).